The following is a 157-amino-acid chain: Transcription elongation factor GreA (157 aa).

A coiled-coil region spans residues 13–75; it reads RARLEAELEE…EIKSILARAQ (63 aa). The tract at residues 113-142 is disordered; the sequence is EAKPSEGKISNESPIGSALLGKRPRQKVTV.

Belongs to the GreA/GreB family.

Functionally, necessary for efficient RNA polymerase transcription elongation past template-encoded arresting sites. The arresting sites in DNA have the property of trapping a certain fraction of elongating RNA polymerases that pass through, resulting in locked ternary complexes. Cleavage of the nascent transcript by cleavage factors such as GreA or GreB allows the resumption of elongation from the new 3'terminus. GreA releases sequences of 2 to 3 nucleotides. The chain is Transcription elongation factor GreA from Roseiflexus sp. (strain RS-1).